A 455-amino-acid chain; its full sequence is MKKSRGLSDYLWAWTLILSTLSGRSYGQPSQDELKDNTTVFTRILDRLLDGYDNRLRPGLGERVTEVKTDIFVTSFGPVSDHDMEYTIDVFFRQSWKDERLKFKGPMTVLRLNNLMASKIWTPDTFFHNGKKSVAHNMTMPNKLLRITEDGTLLYTMRLTVRAECPMHLEDFPMDAHACPLKFGSYAYTRAEVVYEWTREPARSVVVAEDGSRLNQYDLLGQTVDSGIVQSSTGEYVVMTTHFHLKRKIGYFVIQTYLPCIMTVILSQVSFWLNRESVPARTVFGVTTVLTMTTLSISARNSLPKVAYATAMDWFIAVCYAFVFSALIEFATVNYFTKRGYAWDGKSVVPEKPKKVKDPLIKKNNTYAPTATSYTPNLARGDPGLATIAKSATIEPKEVKPETKPPEPKKTFNSVSKIDRLSRIAFPLLFGIFNLVYWATYLNREPQLKAPTPHQ.

The signal sequence occupies residues 1-27; it reads MKKSRGLSDYLWAWTLILSTLSGRSYG. Residues 28–252 are Extracellular-facing; that stretch reads QPSQDELKDN…FHLKRKIGYF (225 aa). N37 is a glycosylation site (N-linked (GlcNAc...) asparagine). R93 provides a ligand contact to 4-aminobutanoate. A glycan (N-linked (GlcNAc...) asparagine) is linked at N137. T156 provides a ligand contact to 4-aminobutanoate. C165 and C179 are oxidised to a cystine. Residues 253–273 traverse the membrane as a helical segment; sequence VIQTYLPCIMTVILSQVSFWL. The Cytoplasmic segment spans residues 274–278; that stretch reads NRESV. Residues 279-300 form a helical membrane-spanning segment; it reads PARTVFGVTTVLTMTTLSISAR. The Extracellular portion of the chain corresponds to 301-310; that stretch reads NSLPKVAYAT. The helical transmembrane segment at 311–332 threads the bilayer; it reads AMDWFIAVCYAFVFSALIEFAT. Over 333–420 the chain is Cytoplasmic; that stretch reads VNYFTKRGYA…TFNSVSKIDR (88 aa). The chain crosses the membrane as a helical span at residues 421 to 440; that stretch reads LSRIAFPLLFGIFNLVYWAT. Over 441 to 455 the chain is Extracellular; that stretch reads YLNREPQLKAPTPHQ.

Belongs to the ligand-gated ion channel (TC 1.A.9) family. Gamma-aminobutyric acid receptor (TC 1.A.9.5) subfamily. GABRA1 sub-subfamily. As to quaternary structure, heteropentamer, formed by a combination of alpha (GABRA1-6), beta (GABRB1-3), gamma (GABRG1-3), delta (GABRD), epsilon (GABRE), rho (GABRR1-3), pi (GABRP) and theta (GABRQ) subunits, each subunit exhibiting distinct physiological and pharmacological properties. Interacts with UBQLN1. Interacts with TRAK1. Interacts with KIF21B. Identified in a complex of 720 kDa composed of LHFPL4, NLGN2, GABRA1, GABRB2, GABRG2 and GABRB3. Interacts with LHFPL4. Interacts with NLGN2. Interacts with SHISA7; interaction leads to the regulation of GABA(A) receptor trafficking, channel deactivation kinetics and pharmacology. Glycosylated. As to expression, expressed in the cerebellum.

It localises to the postsynaptic cell membrane. The protein resides in the cell membrane. It is found in the cytoplasmic vesicle membrane. It carries out the reaction chloride(in) = chloride(out). Its activity is regulated as follows. Allosterically activated by benzodiazepines, the neuroanesthetic alphaxalone and pentobarbital. Inhibited by the antagonist bicuculline. Potentiated by histamine. Functionally, alpha subunit of the heteropentameric ligand-gated chloride channel gated by Gamma-aminobutyric acid (GABA), a major inhibitory neurotransmitter in the brain. GABA-gated chloride channels, also named GABA(A) receptors (GABAAR), consist of five subunits arranged around a central pore and contain GABA active binding site(s) located at the alpha and beta subunit interface(s). When activated by GABA, GABAARs selectively allow the flow of chloride anions across the cell membrane down their electrochemical gradient. Alpha-1/GABRA1-containing GABAARs are largely synaptic. Chloride influx into the postsynaptic neuron following GABAAR opening decreases the neuron ability to generate a new action potential, thereby reducing nerve transmission. GABAARs containing alpha-1 and beta-2 or -3 subunits exhibit synaptogenic activity; the gamma-2 subunit being necessary but not sufficient to induce rapid synaptic contacts formation. GABAARs function also as histamine receptor where histamine binds at the interface of two neighboring beta subunits and potentiates GABA response. GABAARs containing alpha, beta and epsilon subunits also permit spontaneous chloride channel activity while preserving the structural information required for GABA-gated openings. Alpha-1-mediated plasticity in the orbitofrontal cortex regulates context-dependent action selection. Together with rho subunits, may also control neuronal and glial GABAergic transmission in the cerebellum. The sequence is that of Gamma-aminobutyric acid receptor subunit alpha-1 from Mus musculus (Mouse).